We begin with the raw amino-acid sequence, 129 residues long: Small ribosomal subunit protein uS11 (129 aa).

This sequence belongs to the universal ribosomal protein uS11 family. As to quaternary structure, part of the 30S ribosomal subunit. Interacts with proteins S7 and S18. Binds to IF-3.

Functionally, located on the platform of the 30S subunit, it bridges several disparate RNA helices of the 16S rRNA. Forms part of the Shine-Dalgarno cleft in the 70S ribosome. This chain is Small ribosomal subunit protein uS11, found in Pseudomonas fluorescens (strain ATCC BAA-477 / NRRL B-23932 / Pf-5).